A 379-amino-acid chain; its full sequence is Histone-lysine N-methyltransferase ATXR5 (379 aa).

A compositionally biased stretch (low complexity) spans 1–15 (MATWNASSPAASPCS). The disordered stretch occupies residues 1-42 (MATWNASSPAASPCSSRRRTKAPARRPSSESPPPRKMKSMAE). The transit peptide at 1 to 44 (MATWNASSPAASPCSSRRRTKAPARRPSSESPPPRKMKSMAEIM) directs the protein to the chloroplast. Residues 64 to 114 (NVTCEKCGSGEGDDELLLCDKCDRGFHMKCLRPIVVRVPIGTWLCVDCSDQ) form a PHD-type zinc finger. Positions 122 to 129 (QKKILHFF) match the PIP motif motif. M221 is a binding site for substrate. The SET domain maps to 245-367 (PPLVVVFDPL…KGERLYYDYN (123 aa)). S-adenosyl-L-methionine-binding positions include 255–257 (EGY) and 317–321 (RFING). Residue R339 participates in substrate binding. Y366 is an S-adenosyl-L-methionine binding site. 369 to 370 (YE) contacts substrate. Residue Y373 coordinates S-adenosyl-L-methionine.

This sequence belongs to the class V-like SAM-binding methyltransferase superfamily. Histone-lysine methyltransferase family. TRX/MLL subfamily. In terms of assembly, isoform 1 but not isoform 2 interacts with PCNA1 and PCNA2. Interacts (via PHD domain) with HTR1 (via N-terminus). Isoform 2 interacts with IPS1. In terms of tissue distribution, expressed in leaves, roots, stems, flowers, siliques and developing pollen. Up-regulated in tissues where cell division is active.

The protein resides in the nucleus. It localises to the plastid. The protein localises to the chloroplast. The enzyme catalyses L-lysyl(27)-[histone H3] + S-adenosyl-L-methionine = N(6)-methyl-L-lysyl(27)-[histone H3] + S-adenosyl-L-homocysteine + H(+). Histone methyltransferase that specifically monomethylates 'Lys-27' of histone H3 (H3K27me1). Has much higher activity on nucleosomes containing H3.1 than H3.3. Involved in the formation of constitutive heterochromatin and the silencing of heterochromatic elements. Influences which sets of rRNA gene variants are expressed or silenced. The protein is Histone-lysine N-methyltransferase ATXR5 (ATXR5) of Arabidopsis thaliana (Mouse-ear cress).